Here is a 466-residue protein sequence, read N- to C-terminus: Hepatocyte nuclear factor 3-alpha (466 aa).

A DNA-binding region (fork-head) is located at residues 169-260 (AKPPYSYISL…GNMFENGCYL (92 aa)). The segment at 251 to 288 (GNMFENGCYLRRQKRFKCEKQPGAGGGSGGGGSKGVPE) is essential for DNA binding. Residues 269–358 (EKQPGAGGGS…ASSSAPPISS (90 aa)) are disordered. Residues 273 to 284 (GAGGGSGGGGSK) are compositionally biased toward gly residues. Residues serine 303 and serine 327 each carry the phosphoserine modification. Low complexity-rich tracts occupy residues 318 to 328 (GAPAPGPAASP) and 344 to 358 (ELKSPASSSAPPISS).

Binds DNA as a monomer. Interacts with FOXA2. Interacts with NKX2-1. Interacts with HDAC7. Interacts with the histone H3-H4 heterodimer. Associates with nucleosomes containing histone H2A. Interacts with AR. Interacts with NR0B2. Liver.

Its subcellular location is the nucleus. Its function is as follows. Transcription factor that is involved in embryonic development, establishment of tissue-specific gene expression and regulation of gene expression in differentiated tissues. Is thought to act as a 'pioneer' factor opening the compacted chromatin for other proteins through interactions with nucleosomal core histones and thereby replacing linker histones at target enhancer and/or promoter sites. Binds DNA with the consensus sequence 5'-[AC]A[AT]T[AG]TT[GT][AG][CT]T[CT]-3'. Proposed to play a role in translating the epigenetic signatures into cell type-specific enhancer-driven transcriptional programs. Involved in glucose homeostasis; activates the GCG promoter. Involved in the development of multiple endoderm-derived organ systems such as the liver, pancreas, lungs and prostate; FOXA1 and FOXA2 seem to have at least in part redundant roles. Modulates the transcriptional activity of nuclear hormone receptors. Is required for maximal gene activation mediated by AR in the prostate. Negatively regulates AR transactivation via competition with coactivators such as NCOA2. Is involved in ESR1-mediated transcription. Involved in regulation of apoptosis. Involved in cell cycle regulation. Originally described as a transcription activator for a number of liver genes such as AFP, albumin, tyrosine aminotransferase, PEPCK, etc. Interacts with the cis-acting regulatory regions of these genes. In Rattus norvegicus (Rat), this protein is Hepatocyte nuclear factor 3-alpha (Foxa1).